Reading from the N-terminus, the 712-residue chain is Copper amine oxidase 1 (712 aa).

319-330 is a binding site for substrate; sequence AFDLGEYGAGYL. Asp321 (proton acceptor) is an active-site residue. An intrachain disulfide couples Cys340 to Cys366. Residue 404-409 coordinates substrate; sequence AANYEY. Residue Tyr407 is the Schiff-base intermediate with substrate; via topaquinone of the active site. Residue Tyr407 is modified to 2',4',5'-topaquinone. Cu cation contacts are provided by His458 and His460. Mn(2+) contacts are provided by Asp616 and Ile617. Residue His627 coordinates Cu cation.

This sequence belongs to the copper/topaquinone oxidase family. In terms of assembly, homodimer. The cofactor is Cu cation. Requires Zn(2+) as cofactor. It depends on L-topaquinone as a cofactor. Mn(2+) is required as a cofactor. Post-translationally, topaquinone (TPQ) is generated by copper-dependent autoxidation of a specific tyrosyl residue.

The protein localises to the cytoplasm. It catalyses the reaction a primary methyl amine + O2 + H2O = an aldehyde + H2O2 + NH4(+). Functionally, copper amine oxidase involved in the metabolism of xenobiotic and biogenic amines. Capable of catalyzing the oxidative deamination of primary amines such as ethylamine as alternate sources of nitrogen to support growth. The protein is Copper amine oxidase 1 (cao1) of Schizosaccharomyces pombe (strain 972 / ATCC 24843) (Fission yeast).